A 963-amino-acid chain; its full sequence is Ras-interacting protein 1 (963 aa).

Positions 1–10 (MLSGERKEGG) are enriched in basic and acidic residues. 2 disordered regions span residues 1 to 22 (MLSGERKEGGSPRFGKLHLPVG) and 35 to 118 (LGRR…AQRW). The segment covering 41–57 (SAASVKSSSSDTGSRSS) has biased composition (low complexity). Arg-94 is modified (omega-N-methylarginine). Residues 96 to 113 (SGTGTTGSSGAGGPGTPG) are compositionally biased toward gly residues. In terms of domain architecture, Ras-associating spans 144 to 259 (PPGVLKIFGA…RRFELRGREE (116 aa)). Phosphoserine is present on residues Ser-188, Ser-280, and Ser-292. A disordered region spans residues 267-356 (AFGAADSEGT…LSMAPGAADA (90 aa)). A compositionally biased stretch (low complexity) spans 290–301 (AASGGAALASPG). A compositionally biased stretch (gly residues) spans 302-313 (PGTGSGAPAGSG). Residues 320 to 333 (NLSLRRSVSELSLQ) are compositionally biased toward low complexity. Phosphoserine occurs at positions 326, 328, 331, and 419. The 298-residue stretch at 600–897 (GRLARLIKEA…PPAEREAVDT (298 aa)) folds into the Dilute domain.

Interacts with Ras family members that have been activated by GTP binding. Interacts with HRAS, RAP1A, RAP2, RRAS, RAF1 and RRAS2. Interacts with MYH9 and ARHGAP29. In terms of tissue distribution, highly expressed in heart. Detected at lower levels in placenta and pancreas.

The protein localises to the cytoplasm. Its subcellular location is the perinuclear region. The protein resides in the golgi apparatus. It is found in the golgi stack. Its function is as follows. Required for the proper formation of vascular structures that develop via both vasculogenesis and angiogenesis. Acts as a critical and vascular-specific regulator of GTPase signaling, cell architecture, and adhesion, which is essential for endothelial cell morphogenesis and blood vessel tubulogenesis. Regulates the activity of Rho GTPases in part by recruiting ARHGAP29 and suppressing RhoA signaling and dampening ROCK and MYH9 activities in endothelial cells. May act as effector for Golgi-bound HRAS and other Ras-like proteins. May promote HRAS-mediated transformation. Negative regulator of amino acid starvation-induced autophagy. The sequence is that of Ras-interacting protein 1 (RASIP1) from Homo sapiens (Human).